Reading from the N-terminus, the 465-residue chain is ATP synthase subunit beta (465 aa).

151-158 is a binding site for ATP; it reads GGAGVGKT.

Belongs to the ATPase alpha/beta chains family. As to quaternary structure, F-type ATPases have 2 components, CF(1) - the catalytic core - and CF(0) - the membrane proton channel. CF(1) has five subunits: alpha(3), beta(3), gamma(1), delta(1), epsilon(1). CF(0) has four main subunits: a(1), b(1), b'(1) and c(9-12).

Its subcellular location is the cell inner membrane. It carries out the reaction ATP + H2O + 4 H(+)(in) = ADP + phosphate + 5 H(+)(out). In terms of biological role, produces ATP from ADP in the presence of a proton gradient across the membrane. The catalytic sites are hosted primarily by the beta subunits. The polypeptide is ATP synthase subunit beta (Chloroherpeton thalassium (strain ATCC 35110 / GB-78)).